We begin with the raw amino-acid sequence, 183 residues long: Protein Syd (183 aa).

This sequence belongs to the Syd family.

Its subcellular location is the cell inner membrane. In terms of biological role, interacts with the SecY protein in vivo. May bind preferentially to an uncomplexed state of SecY, thus functioning either as a chelating agent for excess SecY in the cell or as a regulatory factor that negatively controls the translocase function. The sequence is that of Protein Syd from Aliivibrio fischeri (strain ATCC 700601 / ES114) (Vibrio fischeri).